The following is a 278-amino-acid chain: Probable 3-hydroxybutyryl-CoA dehydrogenase (278 aa).

The protein belongs to the 3-hydroxyacyl-CoA dehydrogenase family.

The catalysed reaction is (3S)-3-hydroxybutanoyl-CoA + NADP(+) = acetoacetyl-CoA + NADPH + H(+). Its pathway is lipid metabolism; butanoate metabolism. This Deinococcus radiodurans (strain ATCC 13939 / DSM 20539 / JCM 16871 / CCUG 27074 / LMG 4051 / NBRC 15346 / NCIMB 9279 / VKM B-1422 / R1) protein is Probable 3-hydroxybutyryl-CoA dehydrogenase (hbd).